Consider the following 1538-residue polypeptide: Phenolphthiocerol/phthiocerol polyketide synthase subunit B (1538 aa).

One can recognise a Ketosynthase family 3 (KS3) domain in the interval 33–455 (AEPVAVVGIG…GTNAHVIIEQ (423 aa)). Residues C205, H340, and H377 each act as for beta-ketoacyl synthase activity in the active site. The segment at 553 to 882 (DGSPGPGTVF…TNLYTADIAH (330 aa)) is acyltransferase. S649 serves as the catalytic For malonyltransferase activity. NADP(+) is bound at residue 1153-1196 (SQLVIGATGNIGPHLIRQLARMGAKTIVAMARKPGALDELTQCL). The segment at 1153–1328 (SQLVIGATGN…TVVDWGLWKS (176 aa)) is beta-ketoacyl reductase. Residues 1423 to 1498 (DMLFDHVGAL…SLTDYLATVL (76 aa)) form the Carrier domain. S1458 carries the post-translational modification O-(pantetheine 4'-phosphoryl)serine.

It depends on NADP(+) as a cofactor. Requires pantetheine 4'-phosphate as cofactor.

It carries out the reaction icosanoyl-[(phenol)carboxyphthiodiolenone synthase] + 2 (S)-methylmalonyl-CoA + 3 malonyl-CoA + 5 NADPH + 10 H(+) = C32-carboxyphthiodiolenone-[(phenol)carboxyphthiodiolenone synthase] + 5 CO2 + 5 NADP(+) + 5 CoA + 2 H2O. The catalysed reaction is docosanoyl-[(phenol)carboxyphthiodiolenone synthase] + 2 (S)-methylmalonyl-CoA + 3 malonyl-CoA + 5 NADPH + 10 H(+) = C34-carboxyphthiodiolenone-[(phenol)carboxyphthiodiolenone synthase] + 5 CO2 + 5 NADP(+) + 5 CoA + 2 H2O. It catalyses the reaction 17-(4-hydroxyphenyl)heptadecanoyl-[(phenol)carboxyphthiodiolenone synthase] + 2 (S)-methylmalonyl-CoA + 3 malonyl-CoA + 5 NADPH + 10 H(+) = C35-(phenol)carboxyphthiodiolenone-[(phenol)carboxyphthiodiolenone synthase] + 5 CO2 + 5 NADP(+) + 5 CoA + 2 H2O. The enzyme catalyses 19-(4-hydroxyphenyl)nonadecanoyl-[(phenol)carboxyphthiodiolenone synthase] + 2 (S)-methylmalonyl-CoA + 3 malonyl-CoA + 5 NADPH + 10 H(+) = C37-(phenol)carboxyphthiodiolenone-[(phenol)carboxyphthiodiolenone synthase] + 5 CO2 + 5 NADP(+) + 5 CoA + 2 H2O. Its pathway is lipid metabolism; fatty acid biosynthesis. In terms of biological role, part of the PpsABCDE complex involved in the biosynthesis of the lipid core common to phthiocerols and phenolphthiocerols by successive additions of malonyl-CoA or methylmalonyl-CoA extender units. PpsA can accept as substrate the activated forms of either icosanoyl (C20), docosanoyl (C22) or lignoceroyl (C24) groups from FadD26, or a (4-hydroxyphenyl)-C17 or (4-hydroxyphenyl)-C19 fatty acyl from FadD29. PpsA initiates the biosynthesis and extends its substrate using a malonyl-CoA extender unit. The PpsB and PpsC proteins add the second and third malonyl-CoA extender units. PpsD adds an (R)-methylmalonyl unit and PpsE adds a second (R)-methylmalonyl unit. The incorporation of the methylmalonyl units results in formation of two branched methyl groups in the elongated product. In Mycobacterium bovis (strain ATCC BAA-935 / AF2122/97), this protein is Phenolphthiocerol/phthiocerol polyketide synthase subunit B (ppsB).